We begin with the raw amino-acid sequence, 180 residues long: MLCLLLTLGVALVCGVPAMDIPQTKQDLELPKLAGTWHSMAMATNNISLMATLKAPLRVHITSLLPTPEDNLEIVLHRWENNSCVEKKVLGEKTENPKKFKINYTVANEATLLDTDYDNFLFLCLQDTTTPIQSMMCQYLARVLVEDDEIMQGFIRAFRPLPRHLWYLLDLKQMEEPCRF.

An N-terminal signal peptide occupies residues 1-18 (MLCLLLTLGVALVCGVPA). Asparagine 46 and asparagine 81 each carry an N-linked (GlcNAc...) (complex) asparagine glycan. Intrachain disulfides connect cysteine 84/cysteine 178 and cysteine 124/cysteine 137.

This sequence belongs to the calycin superfamily. Lipocalin family. Homodimer. In terms of processing, four distinct glycoforms A, C, F and S arise from different N-linked oligosaccharide chains at amino acid residues Asn-46 and Asn-81. Glycodelin-A and -F are taken up by the cumulus cells in which partial deglycosylation takes place to produce glycodelin-C. As to expression, this protein is, the main protein synthesized and secreted in the endometrium from mid-luteal phase of the menstrual cycle and during the first semester of pregnancy. Glycodelin-A is expressed in amniotic fluid, endometrium/decidua and maternal serum (at protein level). Glycodelin-F is expressed in follicular fluid, luteinized granulosa cells and the oviduct (at protein level). Glycodelin-S is expressed in seminal plasma and seminal vesicles (at protein level). Glycodelin-C is detected in cumulus cells (at protein level), but cumulus cells do not synthesize Glycodelin-C but take up and convert glycodelin-A and -F vis glycan remodeling.

The protein resides in the secreted. Glycoprotein that regulates critical steps during fertilization and also has immunomonomodulatory effects. Four glycoforms, namely glycodelin-S, -A, -F and -C have been identified in reproductive tissues that differ in glycosylation and biological activity. Glycodelin-A has contraceptive and immunosuppressive activities. Glycodelin-C stimulates binding of spermatozoa to the zona pellucida. Glycodelin-F inhibits spermatozoa-zona pellucida binding and significantly suppresses progesterone-induced acrosome reaction of spermatozoa. Glycodelin-S in seminal plasma maintains the uncapacitated state of human spermatozoa. The protein is Glycodelin (PAEP) of Homo sapiens (Human).